The primary structure comprises 204 residues: Putative AgrB-like protein (204 aa).

4 helical membrane-spanning segments follow: residues 40–60, 87–107, 111–131, and 156–176; these read IILI…ATGL, LNCT…FQNI, NWIV…FAPA, and LILT…LIMV.

The protein belongs to the AgrB family.

The protein resides in the cell membrane. May be involved in the proteolytic processing of a quorum sensing system signal molecule precursor. The protein is Putative AgrB-like protein of Listeria welshimeri serovar 6b (strain ATCC 35897 / DSM 20650 / CCUG 15529 / CIP 8149 / NCTC 11857 / SLCC 5334 / V8).